The chain runs to 354 residues: Uroporphyrinogen decarboxylase (354 aa).

Residues Arg-27–Arg-31, Asp-77, Tyr-154, Thr-209, and His-327 contribute to the substrate site.

It belongs to the uroporphyrinogen decarboxylase family. As to quaternary structure, homodimer.

The protein resides in the cytoplasm. The catalysed reaction is uroporphyrinogen III + 4 H(+) = coproporphyrinogen III + 4 CO2. The protein operates within porphyrin-containing compound metabolism; protoporphyrin-IX biosynthesis; coproporphyrinogen-III from 5-aminolevulinate: step 4/4. Catalyzes the decarboxylation of four acetate groups of uroporphyrinogen-III to yield coproporphyrinogen-III. This is Uroporphyrinogen decarboxylase from Escherichia fergusonii (strain ATCC 35469 / DSM 13698 / CCUG 18766 / IAM 14443 / JCM 21226 / LMG 7866 / NBRC 102419 / NCTC 12128 / CDC 0568-73).